We begin with the raw amino-acid sequence, 699 residues long: Ecdysone-inducible protein E75 (699 aa).

The disordered stretch occupies residues 1–31 (MTLVMSPDSSYGRYDAPTPTDVTSPVHRERE). Positions 42 to 118 (TVLCRVCGDK…VGMSRDAVRF (77 aa)) form a DNA-binding region, nuclear receptor. NR C4-type zinc fingers lie at residues 45–65 (CRVC…CEGC) and 82–106 (CTKN…LKKC). The 248-residue stretch at 152 to 399 (DAPRLLARVV…QQMWSEEEAV (248 aa)) folds into the NR LBD domain. Disordered stretches follow at residues 466-528 (TVTP…DDMP), 561-607 (RRDT…STHS), and 679-699 (LNLS…MLEA). 2 stretches are compositionally biased toward basic and acidic residues: residues 510–520 (SLEEHNEDRRP) and 561–571 (RRDTGEAEART). Over residues 575-588 (TPSPQPQHPHPANP) the composition is skewed to pro residues.

Belongs to the nuclear hormone receptor family. NR1 subfamily.

It is found in the nucleus. Implicated in the regulation of ecdysone-triggered gene hierarchies. Probably plays a key role in mediating the regulation of the larval molt by 20-OH-ecdysone. This Manduca sexta (Tobacco hawkmoth) protein is Ecdysone-inducible protein E75 (E75).